The sequence spans 154 residues: Ribosome maturation factor RimP (154 aa).

The protein belongs to the RimP family.

It localises to the cytoplasm. Its function is as follows. Required for maturation of 30S ribosomal subunits. The polypeptide is Ribosome maturation factor RimP (Desulforudis audaxviator (strain MP104C)).